A 412-amino-acid chain; its full sequence is Early growth response protein 2b (412 aa).

The segment at 269–299 (YTPQNLPLRPILRPRKYPNRPSKTPVHERPY) is disordered. 3 consecutive C2H2-type zinc fingers follow at residues 299–323 (YPCP…IRIH), 329–351 (FQCR…IRTH), and 357–379 (FACD…TKIH). A disordered region spans residues 371–412 (ERKRHTKIHLRQKERKSSSSSTGVSSSERGVATSICSSSSNQ). Positions 374-384 (RHTKIHLRQKE) are enriched in basic residues. Residues 388-401 (SSSSTGVSSSERGV) show a composition bias toward low complexity.

This sequence belongs to the EGR C2H2-type zinc-finger protein family.

The protein localises to the nucleus. Sequence-specific DNA-binding transcription factor. Binds to two specific DNA sites located in the promoter region of HOXA4. This chain is Early growth response protein 2b (egr2b), found in Danio rerio (Zebrafish).